The chain runs to 130 residues: uncharacterized protein (130 aa).

The signal sequence occupies residues 1-19 (MLAPLFLCCLRNLFRKLIS).

Its subcellular location is the secreted. This is an uncharacterized protein from Homo sapiens (Human).